The primary structure comprises 120 residues: MALNIEEIIASVKEASVLELNDLVKAIEEEFGVTAAAPVAVAAAGGAAAEQTEFTVELASAGDSKIKVIKVVREITGLGLKEAKELVDNAPKALKEGIAKDEAEEIKAKLEEVGANVEVK.

Belongs to the bacterial ribosomal protein bL12 family. In terms of assembly, homodimer. Part of the ribosomal stalk of the 50S ribosomal subunit. Forms a multimeric L10(L12)X complex, where L10 forms an elongated spine to which 2 to 4 L12 dimers bind in a sequential fashion. Binds GTP-bound translation factors.

Functionally, forms part of the ribosomal stalk which helps the ribosome interact with GTP-bound translation factors. Is thus essential for accurate translation. This Listeria monocytogenes serovar 1/2a (strain ATCC BAA-679 / EGD-e) protein is Large ribosomal subunit protein bL12.